The primary structure comprises 819 residues: MIMTESRAVIHLEPPAETSQEQADLLIVKVEEEDCSWMQGYNRPVLETFYQRFKHFQYHEAAGPRDALSQLRVLCCEWLRPELHTKEQILELLVLEQFLTILPEEFQAWVREHHPESGEEAVAVIESIQRELEERRQQIATSPEVLPQKMVPPGATQESFSHQCLPVEAQPERESQNLLEENALPVLQVSSVPLKDSQELTDSLLSDGPQKLVKTEDVADVAVSFILEEWAHLDQSQKSLGRDSRKEDCESTTPVDYEPKEGNLEFTVQQVSDAADPHWVAAERTEKNGVQRPESGEVSDLKDMVPRWQVNPTSGNPRQKRPLRSGPDVNRKQKSNGERGHRCGDCGKFFLQASNFIQHRRIHTGEKPFKCGECGKSYNQRVHLTQHQRVHTGEKPYKCQVCGKAFRVSSHLVQHHSVHSGERPYGCNECGKSFGRHSHLIEHLKRHFREKSQRCSDRRSKNTKLNIKQIPGLSEADLELSGEVQRNACQAEGHSEGCEHQDGQQGVVMKETLGQSSSKRTDCNEFSYVHKKSSPGERPHQCNECGKSFIQSAHLIQHRRIHTGEKPFRCEECGKSYNQRVHLTQHHRVHTGEKPYACHLCGKAFRVRSHLVQHQSVHSRERPFKCNECGKGFGRRSHLAGHLRLHSRDKSHQCHECGEIFFQYVSLLEHQVLHVGQKSEKNGICEEAYSWNLTVIKDKKLELQEQPYQCDSCGKAFSYSSDLIQHYRTHSAEKPQKCDACRDSTCQCPHIKQQQKSCPSGKSHQCNECGRGFSLKSHLSQHQRIHTGEKPLQCKECGMSFSWSCSLFKHLRSHERTDP.

One can recognise an SCAN box domain in the interval 51-132; sequence QRFKHFQYHE…AVIESIQREL (82 aa). Residues K214, K246, and K302 each participate in a glycyl lysine isopeptide (Lys-Gly) (interchain with G-Cter in SUMO2) cross-link. One can recognise a KRAB domain in the interval 216–287; sequence EDVADVAVSF…HWVAAERTEK (72 aa). 2 disordered regions span residues 236–263 and 283–340; these read SQKS…KEGN and ERTE…GERG. The span at 240 to 249 shows a compositional bias: basic and acidic residues; it reads LGRDSRKEDC. Basic and acidic residues predominate over residues 329 to 340; it reads VNRKQKSNGERG. 9 C2H2-type zinc fingers span residues 341 to 363, 369 to 391, 397 to 419, 425 to 447, 540 to 562, 568 to 590, 596 to 618, 624 to 646, and 652 to 674; these read HRCG…RRIH, FKCG…QRVH, YKCQ…HSVH, YGCN…LKRH, HQCN…RRIH, FRCE…HRVH, YACH…QSVH, FKCN…LRLH, and HQCH…QVLH. Residue K700 forms a Glycyl lysine isopeptide (Lys-Gly) (interchain with G-Cter in SUMO2) linkage. 3 C2H2-type zinc fingers span residues 708–730, 764–786, and 792–814; these read YQCD…YRTH, HQCN…QRIH, and LQCK…LRSH. A Glycyl lysine isopeptide (Lys-Gly) (interchain with G-Cter in SUMO2) cross-link involves residue K776.

It belongs to the krueppel C2H2-type zinc-finger protein family. In terms of tissue distribution, testis specific.

Its subcellular location is the nucleus. In terms of biological role, may be involved in transcriptional regulation. The polypeptide is Zinc finger protein with KRAB and SCAN domains 5 (Zkscan5) (Mus musculus (Mouse)).